A 226-amino-acid polypeptide reads, in one-letter code: MYSIKCDDNKVMPRERLMRLGAESLSNQELLAILLRTGNKEKHVLELSSYLLSHLDSLADFKKMSLQELQHLAGIGKVKAIEIKAMIELVSRILATDKTLTDSVLTSVQVAEKIMAALGDKKQEHLVVLYLDNQNRIFEEKTIFIGTVRRSLAEPREILYYACKNMATSLIVIHNHPSGNIEPSSNDYCFTEKIKRSCEDLGIICLDHIIVSYKDYYSFREKSTLF.

An MPN domain is found at 103-225; that stretch reads SVLTSVQVAE…YYSFREKSTL (123 aa). Residues histidine 174, histidine 176, and aspartate 187 each coordinate Zn(2+). The JAMM motif motif lies at 174–187; that stretch reads HNHPSGNIEPSSND.

The protein belongs to the UPF0758 family.

The polypeptide is UPF0758 protein SPs0978 (Streptococcus pyogenes serotype M3 (strain SSI-1)).